The following is a 388-amino-acid chain: Endoglucanase 3 (388 aa).

Residues 1–16 (MKHSVLAGLFATGALA) form the signal peptide. The CBM1 domain maps to 17–52 (QGGAWQQCGGVGFSGSTSCVSGYTCVYLNDWYSQCQ). 2 disulfide bridges follow: cysteine 24–cysteine 41 and cysteine 35–cysteine 51. Positions 53-91 (PQPTTLRTTTTPGATSTTRSAPAATSTTPAKGKFKWFGI) are linker. The disordered stretch occupies residues 56 to 81 (TTLRTTTTPGATSTTRSAPAATSTTP). N-linked (GlcNAc...) asparagine glycans are attached at residues asparagine 92 and asparagine 155. The catalytic stretch occupies residues 92–388 (NQSCAEFGKG…YNSLLKKYVP (297 aa)). Glutamate 215 functions as the Proton donor in the catalytic mechanism. A glycan (N-linked (GlcNAc...) asparagine) is linked at asparagine 259. The active-site Nucleophile is the glutamate 322.

This sequence belongs to the glycosyl hydrolase 5 (cellulase A) family.

It catalyses the reaction Endohydrolysis of (1-&gt;4)-beta-D-glucosidic linkages in cellulose, lichenin and cereal beta-D-glucans.. In Humicola insolens (Soft-rot fungus), this protein is Endoglucanase 3 (CMC3).